The chain runs to 833 residues: Patatin-like phospholipase domain-containing protein SNOG_00918 (833 aa).

Disordered regions lie at residues 1-20 (MTDV…SAFD) and 49-71 (HLSP…SANN). Residues 108 to 128 (WPLLVVVLGWLLFLSIAYVFT) traverse the membrane as a helical segment. The region spanning 301 to 457 (LCLSGGATFA…RTDIPLKALN (157 aa)) is the PNPLA domain. The short motif at 332–336 (GTSGG) is the GXSXG element. Serine 334 (nucleophile) is an active-site residue. Aspartate 444 functions as the Proton acceptor in the catalytic mechanism. 2 disordered regions span residues 630–657 (TKSK…FSRP) and 680–833 (LRTD…GKGL). The segment covering 644–655 (SGSESSSSADFS) has biased composition (low complexity). The span at 689-707 (DTPNSPSLSARLTGWWNTK) shows a compositional bias: polar residues. 3 stretches are compositionally biased toward basic and acidic residues: residues 740 to 750 (RPPKEVRDLQA), 759 to 769 (RNSDFLEEIRR), and 782 to 794 (DEGR…RGDV). Over residues 809–819 (EFGDNEGDGEE) the composition is skewed to acidic residues.

It belongs to the PLPL family.

It is found in the membrane. Functionally, probable lipid hydrolase. In Phaeosphaeria nodorum (strain SN15 / ATCC MYA-4574 / FGSC 10173) (Glume blotch fungus), this protein is Patatin-like phospholipase domain-containing protein SNOG_00918.